Here is a 2684-residue protein sequence, read N- to C-terminus: Teneurin-1 (2684 aa).

Disordered stretches follow at residues 1 to 37, 127 to 156, and 170 to 204; these read MFQH…HDYT, TTSS…PTYS, and GTNQ…KKFD. The Cytoplasmic portion of the chain corresponds to 1 to 216; that stretch reads MFQHRTTNAQ…SDTCSRWPSK (216 aa). Over residues 11 to 24 the composition is skewed to pro residues; the sequence is GPPPNRPMPRPPAG. Positions 127–136 are enriched in low complexity; the sequence is TTSSTLSPAS. Residues 217 to 237 traverse the membrane as a helical segment; it reads WNILLAAALLVALFVICILLF. Residues 238 to 2684 are Extracellular-facing; it reads RAPNYVYTQP…VHSWKFRKSE (2447 aa). EGF-like domains lie at 463-499 and 501-534; these read TGRT…KECE and RHNW…EACE. 6 disulfides stabilise this stretch: Cys-467-Cys-476, Cys-472-Cys-487, Cys-489-Cys-498, Cys-505-Cys-516, Cys-510-Cys-522, and Cys-524-Cys-533. The interval 576 to 614 is disordered; sequence PQAQSPPRRGQEPTESSKTRKAQVKPTPTSEKKKESREL. Composition is skewed to basic and acidic residues over residues 584 to 593 and 605 to 614; these read RGQEPTESSK and SEKKKESREL. 2 consecutive EGF-like domains span residues 650-684 and 716-753; these read DSVD…SNCT and AIDG…VDCS. Disulfide bonds link Cys-654–Cys-666, Cys-659–Cys-672, Cys-674–Cys-683, Cys-720–Cys-730, Cys-724–Cys-741, and Cys-743–Cys-752. 4 NHL repeats span residues 1276–1317, 1334–1378, 1398–1441, and 1470–1513; these read DSCG…IDTT, RTCA…VVHD, SASA…VRKL, and AVSL…VSAR.

The protein belongs to the tenascin family. Teneurin subfamily. Post-translationally, probably proteolytically processed to generate a N-terminal intracellular domain. Isoform 1 is mainly expressed in organs derived from the mesoderm, including the pharynx, vulva muscles, gonad distal tip cells, intestine and several tail neurons. Isoform 2 is mainly expressed in the organs derived from the ectoderm, including hypodermal cells, head ganglion neurons and tail neurons (at protein level).

The protein resides in the nucleus. Its subcellular location is the cell membrane. The protein localises to the membrane. Its function is as follows. Plays a role in the gonadal basement membrane maintenance and/or adhesion early in development. Contributes to the guidance of pharyngeal neurons. In Caenorhabditis elegans, this protein is Teneurin-1 (ten-1).